The sequence spans 57 residues: Large ribosomal subunit protein bL32 (57 aa).

Residues M1–Q19 are compositionally biased toward basic residues. The interval M1 to W20 is disordered.

This sequence belongs to the bacterial ribosomal protein bL32 family.

The protein is Large ribosomal subunit protein bL32 of Corynebacterium aurimucosum (strain ATCC 700975 / DSM 44827 / CIP 107346 / CN-1) (Corynebacterium nigricans).